The primary structure comprises 536 residues: Bifunctional purine biosynthesis protein PurH (536 aa).

In terms of domain architecture, MGS-like spans 8 to 158 (IPAPDEVRIK…KNHAYVTVVT (151 aa)).

It belongs to the PurH family.

It carries out the reaction (6R)-10-formyltetrahydrofolate + 5-amino-1-(5-phospho-beta-D-ribosyl)imidazole-4-carboxamide = 5-formamido-1-(5-phospho-D-ribosyl)imidazole-4-carboxamide + (6S)-5,6,7,8-tetrahydrofolate. The enzyme catalyses IMP + H2O = 5-formamido-1-(5-phospho-D-ribosyl)imidazole-4-carboxamide. It functions in the pathway purine metabolism; IMP biosynthesis via de novo pathway; 5-formamido-1-(5-phospho-D-ribosyl)imidazole-4-carboxamide from 5-amino-1-(5-phospho-D-ribosyl)imidazole-4-carboxamide (10-formyl THF route): step 1/1. The protein operates within purine metabolism; IMP biosynthesis via de novo pathway; IMP from 5-formamido-1-(5-phospho-D-ribosyl)imidazole-4-carboxamide: step 1/1. The sequence is that of Bifunctional purine biosynthesis protein PurH from Sinorhizobium medicae (strain WSM419) (Ensifer medicae).